The primary structure comprises 753 residues: Translation initiation factor IF-2 (753 aa).

Residues 1-166 (MSEKPRRDTG…PVMRPRGPVA (166 aa)) are disordered. Low complexity-rich tracts occupy residues 19-43 (STGQ…ATGA), 71-81 (NARPAAPANAR), and 102-122 (TPAP…TNTR). Residues 133-146 (PQPEEREREREAVL) are compositionally biased toward basic and acidic residues. Over residues 153-162 (TTTRPVMRPR) the composition is skewed to low complexity. Residues 249 to 418 (PRPPVVTIMG…LLVADLEDLR (170 aa)) form the tr-type G domain. The tract at residues 258-265 (GHVDHGKT) is G1. 258 to 265 (GHVDHGKT) serves as a coordination point for GTP. A G2 region spans residues 283–287 (GITQH). Positions 304-307 (DTPG) are G3. Residues 304 to 308 (DTPGH) and 358 to 361 (NKID) each bind GTP. Residues 358–361 (NKID) are G4. The interval 394–396 (SAR) is G5.

It belongs to the TRAFAC class translation factor GTPase superfamily. Classic translation factor GTPase family. IF-2 subfamily.

The protein resides in the cytoplasm. Its function is as follows. One of the essential components for the initiation of protein synthesis. Protects formylmethionyl-tRNA from spontaneous hydrolysis and promotes its binding to the 30S ribosomal subunits. Also involved in the hydrolysis of GTP during the formation of the 70S ribosomal complex. This is Translation initiation factor IF-2 from Chloroflexus aggregans (strain MD-66 / DSM 9485).